The primary structure comprises 1325 residues: Lysine-specific demethylase 3A (1325 aa).

Disordered regions lie at residues 249 to 284 (SKRI…QGHV), 300 to 333 (PANK…RRSV), and 372 to 399 (QNGK…TGLK). The segment covering 274–283 (SPEVSQSQGH) has biased composition (polar residues). The segment covering 378-390 (SLISSRSSSLSDS) has biased composition (low complexity). Residues 669–694 (CDVCDTTIFNLRWVCSKCGFGVCVDC) form a C6-type zinc finger. Disordered regions lie at residues 772-791 (TLKE…SLQQ) and 798-819 (PQLP…TASV). The short motif at 888-892 (LRNLL) is the LXXLL motif element. One can recognise a JmjC domain in the interval 1062–1285 (MPSRFDDLMK…HCFWLTQEFR (224 aa)). Fe cation contacts are provided by H1124, D1126, and H1253.

Belongs to the JHDM2 histone demethylase family. Requires Fe(2+) as cofactor.

The protein localises to the cytoplasm. Its subcellular location is the nucleus. The enzyme catalyses N(6),N(6)-dimethyl-L-lysyl(9)-[histone H3] + 2 2-oxoglutarate + 2 O2 = L-lysyl(9)-[histone H3] + 2 formaldehyde + 2 succinate + 2 CO2. Functionally, histone demethylase that specifically demethylates 'Lys-9' of histone H3, thereby playing a central role in histone code. Preferentially demethylates mono- and dimethylated H3 'Lys-9' residue, with a preference for dimethylated residue, while it has weak or no activity on trimethylated H3 'Lys-9'. Demethylation of Lys residue generates formaldehyde and succinate. The chain is Lysine-specific demethylase 3A (KDM3A) from Gallus gallus (Chicken).